We begin with the raw amino-acid sequence, 102 residues long: Protein GOLVEN 4 (102 aa).

A signal peptide spans 1 to 27 (MEMKKWSYANLITLALLFLFFIILLLA). Residues 28-89 (FQGGSRDDDH…QEREVYVELR (62 aa)) constitute a propeptide that is removed on maturation. The interval 56-78 (KSLKPINPTKKNGFEYPDQGSHD) is disordered. The residue at position 91 (Tyr91) is a Sulfotyrosine. Pro99 carries the hydroxyproline modification.

The protein belongs to the RGF family. Binds to LRR receptor-like serine/threonine-protein kinases to trigger their dimerization with SERK proteins and subsequent signaling. Expressed in roots and sepals.

It is found in the secreted. Its function is as follows. Signaling peptide (root growth factor) that promotes root hairs formation and growth. Maintains the postembryonic root stem cell niche. Regulates the pattern of root growth and lateral root development by modulating the length and the number of cortical cells in the root apical meristem (RAM), and the anticlinal asymmetric cell divisions in lateral root initiation cells. This Arabidopsis thaliana (Mouse-ear cress) protein is Protein GOLVEN 4.